A 401-amino-acid polypeptide reads, in one-letter code: S-adenosylmethionine synthase (401 aa).

H16 contacts ATP. A Mg(2+)-binding site is contributed by D18. Residue E44 participates in K(+) binding. L-methionine contacts are provided by E57 and Q100. Residues 100–110 (QSPDIAQGVNE) form a flexible loop region. Residues 174–176 (DAK), 241–242 (RF), D250, 256–257 (RK), A273, and K277 each bind ATP. Residue D250 participates in L-methionine binding. Residue K281 participates in L-methionine binding.

This sequence belongs to the AdoMet synthase family. Homotetramer; dimer of dimers. The cofactor is Mg(2+). K(+) is required as a cofactor.

It localises to the cytoplasm. It carries out the reaction L-methionine + ATP + H2O = S-adenosyl-L-methionine + phosphate + diphosphate. It functions in the pathway amino-acid biosynthesis; S-adenosyl-L-methionine biosynthesis; S-adenosyl-L-methionine from L-methionine: step 1/1. Catalyzes the formation of S-adenosylmethionine (AdoMet) from methionine and ATP. The overall synthetic reaction is composed of two sequential steps, AdoMet formation and the subsequent tripolyphosphate hydrolysis which occurs prior to release of AdoMet from the enzyme. The polypeptide is S-adenosylmethionine synthase (Streptococcus equi subsp. zooepidemicus (strain MGCS10565)).